A 421-amino-acid chain; its full sequence is O-glycoside alpha-1,2-mannosyltransferase homolog 5 (421 aa).

Residue Glu-318 is the Nucleophile of the active site.

Belongs to the glycosyltransferase 15 family.

The protein localises to the cytoplasm. Probable mannosyltransferase involved in O-glycosylation of cell wall and secreted proteins. This Schizosaccharomyces pombe (strain 972 / ATCC 24843) (Fission yeast) protein is O-glycoside alpha-1,2-mannosyltransferase homolog 5 (omh5).